The following is a 413-amino-acid chain: Serpin A12 (413 aa).

An N-terminal signal peptide occupies residues 1–20 (MTRMLDLGLFLAGLLTVKGL). 2 N-linked (GlcNAc...) asparagine glycosylation sites follow: Asn92 and Asn267. A reactive center loop region spans residues 364–382 (GMEGAAGSGAQTLPMETPR).

This sequence belongs to the serpin family. In terms of assembly, forms a stable complex with KLK7. In terms of processing, glycosylation slightly decreases affinity for heparin, but otherwise has no significant effect on KLK7 inhibitory activity or thermal stability of the protein. Expressed in visceral adipose tissues.

It is found in the secreted. Its activity is regulated as follows. Inhibition of KLK7 is enhanced by heparin. Functionally, adipokine that modulates insulin action by specifically inhibiting its target protease KLK7 in white adipose tissues. The polypeptide is Serpin A12 (Serpina12) (Mus musculus (Mouse)).